The following is a 276-amino-acid chain: Undecaprenyl-diphosphatase 1 (276 aa).

The next 7 membrane-spanning stretches (helical) occupy residues 4 to 24 (ILIC…FLPV), 45 to 62 (KTFD…VCWE), 83 to 103 (FTLN…LFEK), 108 to 128 (VLFS…IILW), 187 to 207 (VATE…TLYE), 217 to 237 (VDSL…AFVC), and 252 to 272 (VFAW…YSGW).

Belongs to the UppP family.

It is found in the cell inner membrane. The enzyme catalyses di-trans,octa-cis-undecaprenyl diphosphate + H2O = di-trans,octa-cis-undecaprenyl phosphate + phosphate + H(+). Functionally, catalyzes the dephosphorylation of undecaprenyl diphosphate (UPP). Confers resistance to bacitracin. This Burkholderia ambifaria (strain ATCC BAA-244 / DSM 16087 / CCUG 44356 / LMG 19182 / AMMD) (Burkholderia cepacia (strain AMMD)) protein is Undecaprenyl-diphosphatase 1.